The sequence spans 270 residues: MLTKRIIPCIDVDLDEDGNPAVYTGINFEDLEYTGDPVEMAKQYNMAGADEFVFLDITASAVGRETMLETVSRVADEIFIPLTVGGGIRTRDDIKSTLRAGADKVSINTAALETPELITTGASAFGSQCIVISVDARRRFDEQGENYLSVDGESCWFECTVKGGREGTGIDVLEWVTEAETRGAGELFINSIDADGTQDGYDIPLTSAVCDAVSTPVIASSGCGSPADMHEVFTEAGADAGLAASIFHFGEYSIEATKEYLDERGVPIRT.

Active-site residues include Asp11 and Asp135.

It belongs to the HisA/HisF family. As to quaternary structure, heterodimer of HisH and HisF.

Its subcellular location is the cytoplasm. It catalyses the reaction 5-[(5-phospho-1-deoxy-D-ribulos-1-ylimino)methylamino]-1-(5-phospho-beta-D-ribosyl)imidazole-4-carboxamide + L-glutamine = D-erythro-1-(imidazol-4-yl)glycerol 3-phosphate + 5-amino-1-(5-phospho-beta-D-ribosyl)imidazole-4-carboxamide + L-glutamate + H(+). It functions in the pathway amino-acid biosynthesis; L-histidine biosynthesis; L-histidine from 5-phospho-alpha-D-ribose 1-diphosphate: step 5/9. Functionally, IGPS catalyzes the conversion of PRFAR and glutamine to IGP, AICAR and glutamate. The HisF subunit catalyzes the cyclization activity that produces IGP and AICAR from PRFAR using the ammonia provided by the HisH subunit. In Haloquadratum walsbyi (strain DSM 16790 / HBSQ001), this protein is Imidazole glycerol phosphate synthase subunit HisF.